A 133-amino-acid chain; its full sequence is Transmembrane protein 60 (133 aa).

The next 4 membrane-spanning stretches (helical) occupy residues 5-25 (LAQR…MLVL), 35-55 (WFLI…LLIV), 78-98 (AWYL…CAKL), and 110-130 (FIPL…NVFF).

The protein localises to the membrane. The polypeptide is Transmembrane protein 60 (TMEM60) (Homo sapiens (Human)).